A 255-amino-acid chain; its full sequence is High-affinity branched-chain amino acid transport ATP-binding protein BraF (255 aa).

Positions 6-254 (LEVSGLTMRF…PDVIKAYLGE (249 aa)) constitute an ABC transporter domain. Position 38 to 45 (38 to 45 (GPNGAGKT)) interacts with ATP.

This sequence belongs to the ABC transporter superfamily.

The protein localises to the cell inner membrane. Functionally, component of the high affinity leucine, isoleucine, valine, transport system (LIV-I), which is operative without Na(+) and is specific for alanine and threonine, in addition to branched-chain amino acids. This is High-affinity branched-chain amino acid transport ATP-binding protein BraF (braF) from Pseudomonas aeruginosa (strain ATCC 15692 / DSM 22644 / CIP 104116 / JCM 14847 / LMG 12228 / 1C / PRS 101 / PAO1).